The following is a 551-amino-acid chain: Enhancer of mRNA-decapping protein 3 (551 aa).

The Sm domain occupies 1-63; it reads MSQFVGFGVQ…LKDLKVLTVA (63 aa). Residues 64-92 are disordered; it reads SQSGKRKQQRQQQQQNDYNQNRGEHIDWQ. The DFDF domain maps to 93 to 129; it reads DDDVSKIKQQEDFDFQRNLGMFNKKDVFAQLKQNDDI. 2 positions are modified to phosphoserine: Ser-257 and Ser-261. Residues 288–527 enclose the YjeF N-terminal domain; that stretch reads VQLLEMESIT…DIGIPQGAYS (240 aa).

Belongs to the EDC3 family. In terms of assembly, homodimer. Interacts with DCP2.

Its subcellular location is the cytoplasm. The protein localises to the P-body. Stimulates decapping of both stable and unstable mRNA during mRNA decay. Does not affect nonsense-mediated mRNA decay. Required for normal P-body assembly. The chain is Enhancer of mRNA-decapping protein 3 (EDC3) from Saccharomyces cerevisiae (strain ATCC 204508 / S288c) (Baker's yeast).